The primary structure comprises 157 residues: Small ribosomal subunit protein uS7 (157 aa).

The protein belongs to the universal ribosomal protein uS7 family. In terms of assembly, part of the 30S ribosomal subunit. Contacts proteins S9 and S11.

In terms of biological role, one of the primary rRNA binding proteins, it binds directly to 16S rRNA where it nucleates assembly of the head domain of the 30S subunit. Is located at the subunit interface close to the decoding center, probably blocks exit of the E-site tRNA. The sequence is that of Small ribosomal subunit protein uS7 from Polaromonas sp. (strain JS666 / ATCC BAA-500).